The sequence spans 125 residues: uncharacterized protein (125 aa).

Positions M1–A21 are cleaved as a signal peptide. A coiled-coil region spans residues K54 to S102. Positions Y96 to K125 are disordered. Basic and acidic residues predominate over residues E108–K125.

This is an uncharacterized protein from Rickettsia bellii (strain RML369-C).